Here is a 372-residue protein sequence, read N- to C-terminus: L-lysine 4-hydroxylase (372 aa).

Fe cation contacts are provided by His-176, Glu-178, and His-312.

This sequence belongs to the clavaminate synthase family. It depends on Fe(2+) as a cofactor.

It catalyses the reaction L-lysine + 2-oxoglutarate + O2 = (4R)-4-hydroxy-L-lysine + succinate + CO2. In terms of biological role, alpha-ketoglutarate-dependent dioxygenase that in vitro catalyzes the regio- and stereoselective hydroxylation of L-lysine, leading to (4R)-4-hydroxy-L-lysine. This chain is L-lysine 4-hydroxylase, found in Flavobacterium sp. (strain CF136).